Reading from the N-terminus, the 32-residue chain is ilv operon leader peptide (32 aa).

The sequence is that of ilv operon leader peptide (ilvL) from Edwardsiella tarda.